Consider the following 820-residue polypeptide: DNA mismatch repair protein MutS (820 aa).

615–622 is an ATP binding site; sequence GPNMAGKS.

The protein belongs to the DNA mismatch repair MutS family.

Its function is as follows. This protein is involved in the repair of mismatches in DNA. It is possible that it carries out the mismatch recognition step. This protein has a weak ATPase activity. This Anaplasma phagocytophilum (strain HZ) protein is DNA mismatch repair protein MutS.